Consider the following 616-residue polypeptide: Chaperone protein DnaK (616 aa).

Thr174 carries the phosphothreonine; by autocatalysis modification. A disordered region spans residues 575-616 (QQTQGAQSDPGAAGFGGQQEAPGAGQDENVVDADYKVVDDDK). The span at 607–616 (ADYKVVDDDK) shows a compositional bias: basic and acidic residues.

This sequence belongs to the heat shock protein 70 family.

Functionally, acts as a chaperone. This is Chaperone protein DnaK from Ruminiclostridium cellulolyticum (strain ATCC 35319 / DSM 5812 / JCM 6584 / H10) (Clostridium cellulolyticum).